We begin with the raw amino-acid sequence, 139 residues long: Small ribosomal subunit protein bS6 (139 aa).

The interval 119–139 is disordered; that stretch reads LKGASKVETPTGPESTDIQEK. A compositionally biased stretch (polar residues) spans 130 to 139; that stretch reads GPESTDIQEK.

This sequence belongs to the bacterial ribosomal protein bS6 family.

Its function is as follows. Binds together with bS18 to 16S ribosomal RNA. The sequence is that of Small ribosomal subunit protein bS6 from Borreliella burgdorferi (strain ZS7) (Borrelia burgdorferi).